Reading from the N-terminus, the 421-residue chain is Gamma-glutamyl phosphate reductase (421 aa).

Belongs to the gamma-glutamyl phosphate reductase family.

The protein localises to the cytoplasm. It carries out the reaction L-glutamate 5-semialdehyde + phosphate + NADP(+) = L-glutamyl 5-phosphate + NADPH + H(+). It participates in amino-acid biosynthesis; L-proline biosynthesis; L-glutamate 5-semialdehyde from L-glutamate: step 2/2. Its function is as follows. Catalyzes the NADPH-dependent reduction of L-glutamate 5-phosphate into L-glutamate 5-semialdehyde and phosphate. The product spontaneously undergoes cyclization to form 1-pyrroline-5-carboxylate. The polypeptide is Gamma-glutamyl phosphate reductase (Pseudomonas aeruginosa (strain LESB58)).